The chain runs to 378 residues: Cyclic di-GMP phosphodiesterase response regulator RpfG (378 aa).

A Response regulatory domain is found at 29–147 (NIVIVDDQMS…ELRARCSNLL (119 aa)). Asp-80 bears the 4-aspartylphosphate mark. In terms of domain architecture, HD-GYP spans 174–371 (VEERERETLS…LEQICGQFST (198 aa)).

As to quaternary structure, interacts with a subset of GGDEF domain-containing proteins. Post-translationally, phosphorylated and activated by RpfC.

Its subcellular location is the cytoplasm. It catalyses the reaction 3',3'-c-di-GMP + 2 H2O = 2 GMP + 2 H(+). In terms of biological role, member of the two-component regulatory system RpfG/RpfC, which is involved in the perception and response to the diffusible signaling factor (DSF), which is essential for cell-cell signaling. Detection of DSF leads to the positive regulation of biofilm dispersal and the production of virulence factors. Activated RpfG degrades cyclic di-GMP to GMP, leading to the activation of Clp, a global transcriptional regulator that regulates a large set of genes in DSF pathway. May also directly control genes involved in biofilm dispersal. This Xanthomonas campestris pv. campestris (strain 8004) protein is Cyclic di-GMP phosphodiesterase response regulator RpfG (rpfG).